A 540-amino-acid polypeptide reads, in one-letter code: Zinc finger CCCH domain-containing protein 46 (540 aa).

The C3H1-type zinc-finger motif lies at 148–175; sequence GFGGVPCSYFARGFCKNGASCRFVHSDG. Residues 258-334 enclose the RRM domain; it reads RQIYLTFPAD…RVLVKPYKEK (77 aa). Basic and acidic residues-rich tracts occupy residues 337–351 and 436–450; these read VPDKYRTNQTTEREL and EYDGGEKGKGSSKEG. Disordered regions lie at residues 337–365, 436–469, and 490–514; these read VPDKYRTNQTTERELSPTGLDSSPRDVLG, EYDGGEKGKGSSKEGSDDDTMNLPERLEDSLPDS, and SDLWSPSSDNDDNSTPSTLSDSFNS. Ser-451 is modified (phosphoserine). Over residues 490–511 the composition is skewed to low complexity; sequence SDLWSPSSDNDDNSTPSTLSDS.

Functionally, possesses RNA-binding and ribonuclease activities in vitro. The chain is Zinc finger CCCH domain-containing protein 46 from Arabidopsis thaliana (Mouse-ear cress).